Reading from the N-terminus, the 384-residue chain is Soluble hydrogenase, small subunit (384 aa).

At Lys194 the chain carries N6-(pyridoxal phosphate)lysine.

It belongs to the class-V pyridoxal-phosphate-dependent aminotransferase family. As to quaternary structure, heterodimer of a large and a small subunit. Pyridoxal 5'-phosphate serves as cofactor.

It is found in the cytoplasm. Functionally, soluble hydrogenase catalyzes both production and consumption of hydrogen from suitable artificial electron donors or acceptors. This subunit catalyzes the tritium-exchange activity. The sequence is that of Soluble hydrogenase, small subunit from Synechococcus sp. (strain PCC 6716).